Consider the following 273-residue polypeptide: Putative B3 domain-containing protein At5g58280 (273 aa).

The segment at residues 127-218 is a DNA-binding region (TF-B3); the sequence is FVKSMVRSHV…KFKIYVFKGN (92 aa). Residues 225–273 are disordered; that stretch reads SARKRGRATTPSEEEEEEEDKDVEESGDEEHSSRATKRSSVRLLRKRKA. Residues 236 to 252 show a composition bias toward acidic residues; the sequence is SEEEEEEEDKDVEESGD. The span at 258-273 shows a compositional bias: basic residues; sequence RATKRSSVRLLRKRKA.

The protein resides in the nucleus. This is Putative B3 domain-containing protein At5g58280 from Arabidopsis thaliana (Mouse-ear cress).